We begin with the raw amino-acid sequence, 287 residues long: uncharacterized protein (287 aa).

A run of 10 helical transmembrane segments spans residues 4-24 (TTNG…SLPA), 36-56 (FLTV…LLIF), 66-86 (LISL…LTAL), 93-113 (SAHA…FGVL), 122-142 (VFWI…LIQG), 148-168 (LGDA…AEGA), 179-199 (VISW…FFFT), 208-228 (VPAL…GFVF), 237-259 (GIAA…ASVI), and 264-286 (VGWA…RRFA). 2 consecutive EamA domains span residues 16 to 139 (LIFS…GFAL) and 158 to 284 (VVCG…AARR).

The protein belongs to the EamA transporter family.

It is found in the cell membrane. This is an uncharacterized protein from Bacillus subtilis (strain 168).